The chain runs to 126 residues: Precursor of CEP2 (126 aa).

The signal sequence occupies residues 1 to 19 (MKLFIITVVTILTISRVFD). The propeptide occupies 20-80 (KTPATTEARK…ENNLKNRFIN (61 aa)). Hydroxyproline is present on residues Pro-84 and Pro-87. The propeptide occupies 96–105 (PRVLNNKFTN). A hydroxyproline mark is found at Pro-109, Pro-112, and Pro-116. A propeptide spanning residues 121-126 (PGVVNV) is cleaved from the precursor.

The protein belongs to the C-terminally encoded plant signaling peptide (CEP) family. In terms of assembly, interacts with CEP receptors (e.g. CEPR1 and CEPR2). The mature small signaling peptide is generated by proteolytic processing of the longer precursor. Mostly expressed in roots. Present in cotyledons, shoot apical meristem (SAM), leaves, inflorescence stems and flowers.

The protein resides in the secreted. It localises to the extracellular space. The protein localises to the apoplast. Functionally, extracellular signaling peptide that represses primary root growth rate. Negatively regulates the number of leaves and flowering, and modulates leaf morphology. Regulates systemic nitrogen (N)-demand signaling. Mediates up-regulation of genes involved in N uptake and assimilation pathways. This chain is Precursor of CEP2, found in Arabidopsis thaliana (Mouse-ear cress).